We begin with the raw amino-acid sequence, 95 residues long: Co-chaperonin GroES (95 aa).

Belongs to the GroES chaperonin family. As to quaternary structure, heptamer of 7 subunits arranged in a ring. Interacts with the chaperonin GroEL.

It is found in the cytoplasm. In terms of biological role, together with the chaperonin GroEL, plays an essential role in assisting protein folding. The GroEL-GroES system forms a nano-cage that allows encapsulation of the non-native substrate proteins and provides a physical environment optimized to promote and accelerate protein folding. GroES binds to the apical surface of the GroEL ring, thereby capping the opening of the GroEL channel. In Desulforapulum autotrophicum (strain ATCC 43914 / DSM 3382 / VKM B-1955 / HRM2) (Desulfobacterium autotrophicum), this protein is Co-chaperonin GroES.